The primary structure comprises 38 residues: Photosystem II reaction center protein L (38 aa).

A helical membrane pass occupies residues 17 to 37 (SLYWGLLLIFVLAILFSSYIF).

It belongs to the PsbL family. PSII is composed of 1 copy each of membrane proteins PsbA, PsbB, PsbC, PsbD, PsbE, PsbF, PsbH, PsbI, PsbJ, PsbK, PsbL, PsbM, PsbT, PsbX, PsbY, PsbZ, Psb30/Ycf12, at least 3 peripheral proteins of the oxygen-evolving complex and a large number of cofactors. It forms dimeric complexes.

The protein resides in the plastid. It localises to the chloroplast thylakoid membrane. One of the components of the core complex of photosystem II (PSII). PSII is a light-driven water:plastoquinone oxidoreductase that uses light energy to abstract electrons from H(2)O, generating O(2) and a proton gradient subsequently used for ATP formation. It consists of a core antenna complex that captures photons, and an electron transfer chain that converts photonic excitation into a charge separation. This subunit is found at the monomer-monomer interface and is required for correct PSII assembly and/or dimerization. This is Photosystem II reaction center protein L from Nephroselmis olivacea (Green alga).